Consider the following 305-residue polypeptide: Phosphatidylinositol:ceramide inositolphosphotransferase 2 (305 aa).

The next 6 helical transmembrane spans lie at 34-54, 81-101, 105-125, 168-188, 198-218, and 221-241; these read LLAG…VHYI, ETVF…PFIL, KIYT…CQFL, VMYG…LVFV, RFIK…IIAS, and HYSV…FCLD. The active site involves His180. Active-site residues include His221 and Asp225.

The protein belongs to the sphingomyelin synthase family. Expressed in leaves, roots, stems, flowers and siliques.

Its subcellular location is the golgi apparatus. It localises to the trans-Golgi network membrane. The catalysed reaction is an N-(2R-hydroxy-very-long-chain fatty acyl)-(R)-4-hydroxysphingoid base + a 1,2-diacyl-sn-glycero-3-phospho-(1D-myo-inositol) = a 1D-myo-inositol-1-phospho-N-[(R)-2-hydroxy-very-long-chain fatty acyl]-(R)-4-hydroxysphingoid base + a 1,2-diacyl-sn-glycerol. The protein operates within sphingolipid metabolism. In terms of biological role, catalyzes the transfer of the phosphorylinositol group from phosphatidylinositol (PI) to phytoceramide, an essential step in sphingolipid biosynthesis. May play an important role in modulating plant programmed cell death (PCD) associated with defense (e.g. toward Golovinomyces cichoracearum) by promoting sphingolipid metabolism and thus regulating ceramide accumulation. The protein is Phosphatidylinositol:ceramide inositolphosphotransferase 2 of Arabidopsis thaliana (Mouse-ear cress).